The following is a 441-amino-acid chain: ACT domain-containing protein ACR8 (441 aa).

ACT domains follow at residues isoleucine 34–valine 110, alanine 115–lysine 196, valine 248–glycine 324, and arginine 326–histidine 405.

As to expression, expressed in roots, leaves, flowers and siliques.

Its function is as follows. May bind amino acids. In Arabidopsis thaliana (Mouse-ear cress), this protein is ACT domain-containing protein ACR8.